The following is a 240-amino-acid chain: Large ribosomal subunit protein bL25 (240 aa).

Disordered regions lie at residues 1–23 (MATVKELKATARPAGGKGAARAE) and 207–240 (PAAAPAAGAKAPAAGAKAPAAGAKAPAAPAAKKK).

It belongs to the bacterial ribosomal protein bL25 family. CTC subfamily. As to quaternary structure, part of the 50S ribosomal subunit; part of the 5S rRNA/L5/L18/L25 subcomplex. Contacts the 5S rRNA. Binds to the 5S rRNA independently of L5 and L18.

Functionally, this is one of the proteins that binds to the 5S RNA in the ribosome where it forms part of the central protuberance. In Rhodopseudomonas palustris (strain BisB18), this protein is Large ribosomal subunit protein bL25.